The sequence spans 124 residues: UPF0231 protein Shewmr4_0656 (124 aa).

This sequence belongs to the UPF0231 family.

This is UPF0231 protein Shewmr4_0656 from Shewanella sp. (strain MR-4).